A 326-amino-acid polypeptide reads, in one-letter code: MRKYRLSEEQRAFSYQEDGTKKNVLLRQIIAISDFNDVIAGTAGGWIDRETVLAQEGNCWIYDQNAIAFGGAVISGNTRITGTSVLWGEVYATDNVWIDNSEISQGAYISDSVTIHDSLVYGQCRIFGHALIDQHSMIVAAQGLTPDHQLLLQIYDRARVSASRIVHQAQIYGDAVVRYAFIEHRAEVFDFASIEGNEENNVWLCDCAKVYGHAQVKAGIEEDAIPTIHYSSQVAEYAIVEGNCVLKHHVLVGGNAVVRGGPILLDEHVVIQGESRITGAVIIENHVELTDHAVVEAFDGDTVHVRGPKVINGEERITRTPLAGLL.

This sequence belongs to the transferase hexapeptide repeat family.

This is an uncharacterized protein from Escherichia coli (strain K12).